A 228-amino-acid polypeptide reads, in one-letter code: Phosphoribosylformylglycinamidine synthase subunit PurQ (228 aa).

Residues 3–225 enclose the Glutamine amidotransferase type-1 domain; that stretch reads FAVLVFPGSN…LTTLKSGVVT (223 aa). Residue Cys86 is the Nucleophile of the active site. Residues His194 and Glu196 contribute to the active site.

In terms of assembly, part of the FGAM synthase complex composed of 1 PurL, 1 PurQ and 2 PurS subunits.

It is found in the cytoplasm. It carries out the reaction N(2)-formyl-N(1)-(5-phospho-beta-D-ribosyl)glycinamide + L-glutamine + ATP + H2O = 2-formamido-N(1)-(5-O-phospho-beta-D-ribosyl)acetamidine + L-glutamate + ADP + phosphate + H(+). The enzyme catalyses L-glutamine + H2O = L-glutamate + NH4(+). It participates in purine metabolism; IMP biosynthesis via de novo pathway; 5-amino-1-(5-phospho-D-ribosyl)imidazole from N(2)-formyl-N(1)-(5-phospho-D-ribosyl)glycinamide: step 1/2. Its function is as follows. Part of the phosphoribosylformylglycinamidine synthase complex involved in the purines biosynthetic pathway. Catalyzes the ATP-dependent conversion of formylglycinamide ribonucleotide (FGAR) and glutamine to yield formylglycinamidine ribonucleotide (FGAM) and glutamate. The FGAM synthase complex is composed of three subunits. PurQ produces an ammonia molecule by converting glutamine to glutamate. PurL transfers the ammonia molecule to FGAR to form FGAM in an ATP-dependent manner. PurS interacts with PurQ and PurL and is thought to assist in the transfer of the ammonia molecule from PurQ to PurL. This chain is Phosphoribosylformylglycinamidine synthase subunit PurQ, found in Latilactobacillus sakei subsp. sakei (strain 23K) (Lactobacillus sakei subsp. sakei).